The sequence spans 126 residues: Phosphoribosyl-AMP cyclohydrolase (126 aa).

Asp82 is a binding site for Mg(2+). Cys83 is a Zn(2+) binding site. Positions 84 and 86 each coordinate Mg(2+). Residues Cys99 and Cys106 each contribute to the Zn(2+) site.

It belongs to the PRA-CH family. In terms of assembly, homodimer. Mg(2+) serves as cofactor. Requires Zn(2+) as cofactor.

Its subcellular location is the cytoplasm. The catalysed reaction is 1-(5-phospho-beta-D-ribosyl)-5'-AMP + H2O = 1-(5-phospho-beta-D-ribosyl)-5-[(5-phospho-beta-D-ribosylamino)methylideneamino]imidazole-4-carboxamide. Its pathway is amino-acid biosynthesis; L-histidine biosynthesis; L-histidine from 5-phospho-alpha-D-ribose 1-diphosphate: step 3/9. Its function is as follows. Catalyzes the hydrolysis of the adenine ring of phosphoribosyl-AMP. The chain is Phosphoribosyl-AMP cyclohydrolase from Micrococcus luteus (strain ATCC 4698 / DSM 20030 / JCM 1464 / CCM 169 / CCUG 5858 / IAM 1056 / NBRC 3333 / NCIMB 9278 / NCTC 2665 / VKM Ac-2230) (Micrococcus lysodeikticus).